The primary structure comprises 140 residues: uncharacterized protein (140 aa).

This is an uncharacterized protein from Synechococcus sp. (strain WH8020).